A 728-amino-acid polypeptide reads, in one-letter code: MDKETIKAHKISDEEYAQILEILGREPNLLELGVISAMWSEHCSYKSSKKYLNGFPTKAPWVIQGPGENAGVIDIGQGMAAVFKVESHNHPSFIEPFAGAATGVGGILRDVFTMGARVVAGLNSLKFGDIHDEKCGKHQKYLVKGVVNGISHYGNCMGVPTIGGECAFDECFNGNILVNAFALGVCKSEDIFYAKAEGVGNPVIYVGSKTGRDGLGGAVMASDSFNEESKSLRPTVQIGDPFSEKLLMEACLELFKTDYIVGIQDMGAAGLTSSSFEMAGRSGSGMKLYLDKTPMRESGMTPYELMLSESQERMLICAKKGYEDKVIEIFKKWDLDAVVMGEVTNTGKMELFWHDELVGLIPIEPLSEKAPILSRPTSEPKYLSEIKNYKFELKSSIQELFIQMLQNENINNKAFIYDQFDSSVQTNTIKADGKLGASVIRIKENGASVAMAIECNSRLNYVNPKIGAALAVASAGRKVACTGAKPLAISDCLNYGNPQNPEVMWQFAQGCEGIKEACKELNTPVVSGNVSLYNETEGVSIYPSPTIVSVGVLEDANKTLKASFEKENLSVYLLGESLGEFGGSMVMKIQDKKVSGSLKELDYKAELALWDLLYKANQNSLLECANSVGIGGIAMTLAKMFAISSVGANLTSDFDDEKMIFDESASRAIIGLSKENEEAFLNLAKEFGVKAYKLGVSTSQKHFKLDSIELSKAELDKLYFESFKEQIQ.

His-42 is an active-site residue. Residues Tyr-45 and Lys-84 each contribute to the ATP site. Mg(2+) is bound at residue Glu-86. Substrate-binding positions include 87 to 90 (SHNH) and Arg-109. The active-site Proton acceptor is His-88. Asp-110 is a binding site for Mg(2+). Gln-237 lines the substrate pocket. Asp-265 contacts Mg(2+). 309–311 (ESQ) provides a ligand contact to substrate. Residues Asp-491 and Gly-528 each contribute to the ATP site. Mg(2+) is bound at residue Asn-529. Ser-531 contributes to the substrate binding site.

This sequence belongs to the FGAMS family. In terms of assembly, monomer. Part of the FGAM synthase complex composed of 1 PurL, 1 PurQ and 2 PurS subunits.

The protein localises to the cytoplasm. It catalyses the reaction N(2)-formyl-N(1)-(5-phospho-beta-D-ribosyl)glycinamide + L-glutamine + ATP + H2O = 2-formamido-N(1)-(5-O-phospho-beta-D-ribosyl)acetamidine + L-glutamate + ADP + phosphate + H(+). The protein operates within purine metabolism; IMP biosynthesis via de novo pathway; 5-amino-1-(5-phospho-D-ribosyl)imidazole from N(2)-formyl-N(1)-(5-phospho-D-ribosyl)glycinamide: step 1/2. Its function is as follows. Part of the phosphoribosylformylglycinamidine synthase complex involved in the purines biosynthetic pathway. Catalyzes the ATP-dependent conversion of formylglycinamide ribonucleotide (FGAR) and glutamine to yield formylglycinamidine ribonucleotide (FGAM) and glutamate. The FGAM synthase complex is composed of three subunits. PurQ produces an ammonia molecule by converting glutamine to glutamate. PurL transfers the ammonia molecule to FGAR to form FGAM in an ATP-dependent manner. PurS interacts with PurQ and PurL and is thought to assist in the transfer of the ammonia molecule from PurQ to PurL. This is Phosphoribosylformylglycinamidine synthase subunit PurL from Campylobacter jejuni subsp. jejuni serotype O:6 (strain 81116 / NCTC 11828).